A 602-amino-acid chain; its full sequence is Spermidine-citrate ligase (602 aa).

Residues 286–288, Lys300, and Arg312 contribute to the ATP site; that span reads SLR.

Belongs to the IucA/IucC family.

The catalysed reaction is spermidine + citrate + ATP = N(8)-citryl-spermidine + AMP + diphosphate + H(+). It functions in the pathway siderophore biosynthesis; petrobactin biosynthesis. In terms of biological role, involved in the biosynthesis of petrobactin, a catecholate siderophore that functions in both iron acquisition and virulence. Catalyzes the ATP-dependent condensation of citric acid and spermidine to form N(8)-citryl-spermidine. It can also catalyze the condensation of several di- and triamine analogs of spermidine with citric acid and the condensation of the citric acid analog tricarballylic acid with spermidine. Required for growth in iron-depleted medium and for full virulence in a mouse model of infection. The sequence is that of Spermidine-citrate ligase from Bacillus anthracis.